We begin with the raw amino-acid sequence, 1476 residues long: Cystic fibrosis transmembrane conductance regulator (1476 aa).

Topologically, residues 1–77 (MQKSPLEKAS…QLIHALRRCF (77 aa)) are cytoplasmic. Residues 78 to 98 (FWRFLFYGILLYLGEVTKAVQ) traverse the membrane as a helical segment. Residues 81 to 365 (FLFYGILLYL…TAVQIWYDSF (285 aa)) form the ABC transmembrane type-1 1 domain. The Extracellular segment spans residues 99-122 (PVLLGRIIASYDPENKVERSIAIY). Residues 123–146 (LGIGLCLLFIVRTLLLHPAIFGLH) form a helical membrane-spanning segment. The Cytoplasmic portion of the chain corresponds to 147–195 (RIGMQMRTAMFSLIYKKTLKLSSRVLDKISIGQLVSLLSNNLNKFDEGL). A helical membrane pass occupies residues 196-216 (ALAHFIWIAPLQVTLLMGLLW). At 217 to 222 (DLLQFS) the chain is on the extracellular side. A helical transmembrane segment spans residues 223 to 243 (AFCGLGLLIILVIFQAILGKM). Over 244 to 298 (MVKYRDQRAAKINERLVITSEIIDNIYSVKAYCWESAMEKMIENLREVELKMTRK) the chain is Cytoplasmic. The helical transmembrane segment at 299–319 (AAYMRFFTSSAFFFSGFFVVF) threads the bilayer. Residues 320 to 339 (LSVLPYTVINGIVLRKIFTT) are Extracellular-facing. The helical transmembrane segment at 340–358 (ISFCIVLRMSVTRQFPTAV) threads the bilayer. The Cytoplasmic portion of the chain corresponds to 359–853 (QIWYDSFGMI…YLRYFTLHKG (495 aa)). ATP-binding positions include Trp-401, 458–465 (GSTGSGKT), and Gln-493. Residues 423 to 646 (SDENNVSFSH…RPDFSSKLMG (224 aa)) enclose the ABC transporter 1 domain. Residue Cys-524 is the site of S-palmitoyl cysteine attachment. Phosphoserine is present on residues Ser-549 and Ser-660. A disordered R region region spans residues 654 to 826 (TEERRSSILT…EEINEEDLKE (173 aa)). A Phosphoserine; by PKA modification is found at Ser-670. Residues Ser-684, Ser-698, and Ser-710 each carry the phosphoserine modification. A Phosphothreonine modification is found at Thr-715. Residues Ser-732, Ser-763, Ser-785, Ser-790, and Ser-808 each carry the phosphoserine modification. A helical membrane pass occupies residues 854–874 (LLLVLIWCVLVFLVEVAASLF). The region spanning 854–1153 (LLLVLIWCVL…SSIDTDSLMR (300 aa)) is the ABC transmembrane type-1 2 domain. Residues 875–913 (VLWLLKNNPVNSGNNGTKISNSSYVVIITSTSFYYIFYI) are Extracellular-facing. Asn-889 and Asn-895 each carry an N-linked (GlcNAc...) asparagine glycan. Residues 914 to 934 (YVGVADTLLALSLFRGLPLVH) form a discontinuously helical membrane-spanning segment. Residues 935–985 (TLITASKILHRKMLHSILHAPMSTISKLKAGGILNRFSKDIAILDDFLPLT) lie on the Cytoplasmic side of the membrane. A helical transmembrane segment spans residues 986 to 1006 (IFDFIQLVFIVIGAIIVVSAL). Residues 1007-1008 (QP) lie on the Extracellular side of the membrane. Residues 1009–1029 (YIFLATVPGLVVFILLRAYFL) traverse the membrane as a helical segment. Residues 1030-1090 (HTAQQLKQLE…TANWFMYLAT (61 aa)) are Cytoplasmic-facing. The helical transmembrane segment at 1091-1111 (LRWFQMRIDMIFVLFFIVVTF) threads the bilayer. Residues 1112–1125 (ISILTTGEGEGTAG) lie on the Extracellular side of the membrane. A helical transmembrane segment spans residues 1126–1146 (IILTLAMNIMSTLQWAVNSSI). Topologically, residues 1147–1476 (DTDSLMRSVS…TEEEVQETRL (330 aa)) are cytoplasmic. One can recognise an ABC transporter 2 domain in the interval 1208–1439 (VKDLTVKYMD…KSIFQQAISS (232 aa)). Residues Tyr-1215 and 1240–1247 (GRTGSGKS) contribute to the ATP site. The interaction with GORASP2 stretch occupies residues 1382–1476 (RVLKQAFAGC…TEEEVQETRL (95 aa)). Cys-1391 carries the S-palmitoyl cysteine lipid modification. Ser-1440 and Ser-1452 each carry phosphoserine. The disordered stretch occupies residues 1446–1476 (FQGRHSSKHKPRTQITALKEETEEEVQETRL). Positions 1466–1476 (ETEEEVQETRL) are enriched in acidic residues. The short motif at 1474 to 1476 (TRL) is the PDZ-binding element.

Belongs to the ABC transporter superfamily. ABCC family. CFTR transporter (TC 3.A.1.202) subfamily. As to quaternary structure, monomer; does not require oligomerization for channel activity. May form oligomers in the membrane. Interacts with SLC26A3, SLC26A6 and NHERF1. Interacts with SHANK2. Interacts with MYO6. Interacts (via C-terminus) with GOPC (via PDZ domain); this promotes CFTR internalization and thereby decreases channel activity. Interacts with SLC4A7 through NHERF1. Found in a complex with MYO5B and RAB11A. Interacts with ANO1. Interacts with SLC26A8. Interacts with AHCYL1; the interaction increases CFTR activity. Interacts with CSE1L. The core-glycosylated form interacts with GORASP2 (via PDZ GRASP-type 1 domain) in respone to ER stress. Interacts with MARCHF2; the interaction leads to CFTR ubiqtuitination and degradation. Interacts with ADGRG2. N-glycosylated. Post-translationally, phosphorylated; cAMP treatment promotes phosphorylation and activates the channel. Dephosphorylation decreases the ATPase activity (in vitro). Phosphorylation at PKA sites activates the channel. Phosphorylation at PKC sites enhances the response to phosphorylation by PKA. Phosphorylated by AMPK; this inhibits channel activity. In terms of processing, ubiquitinated, leading to its degradation in the lysosome. Deubiquitination by USP10 in early endosomes enhances its endocytic recycling to the cell membrane. Ubiquitinated by RNF185 during ER stress. Ubiquitinated by MARCHF2. In terms of tissue distribution, expressed in the epididymis (at protein level). In the initial segment of the epididymis, detected on both the luminal and basolateral sides of the ducts where it is expressed in the duct columnar cells as well as in the interstitial smooth muscle cells. Expressed in sperm in the caput. In the cauda, detected along the luminal border but not continuously and is also expressed on the basolateral surface. Within the caudal lumen, detected on sperm. Isoform 1: Expressed in a variety of epithelial tissues including colon, kidney, lung, small intestine, pancreatic duct and testis. Isoform 2: Expressed only in testis. Isoform 3: Expressed only in testis.

Its subcellular location is the apical cell membrane. The protein localises to the early endosome membrane. It is found in the cell membrane. It localises to the recycling endosome membrane. The protein resides in the endoplasmic reticulum membrane. Its subcellular location is the nucleus. The catalysed reaction is ATP + H2O + closed Cl(-) channel = ADP + phosphate + open Cl(-) channel.. It carries out the reaction chloride(in) = chloride(out). It catalyses the reaction hydrogencarbonate(in) = hydrogencarbonate(out). The enzyme catalyses ATP + H2O = ADP + phosphate + H(+). In terms of biological role, epithelial ion channel that plays an important role in the regulation of epithelial ion and water transport and fluid homeostasis. Mediates the transport of chloride ions across the cell membrane. Possesses an intrinsic ATPase activity and utilizes ATP to gate its channel; the passive flow of anions through the channel is gated by cycles of ATP binding and hydrolysis by the ATP-binding domains. The ion channel is also permeable to HCO(3)(-); selectivity depends on the extracellular chloride concentration. Exerts its function also by modulating the activity of other ion channels and transporters. Contributes to the regulation of the pH and the ion content of the epithelial fluid layer. Modulates the activity of the epithelial sodium channel (ENaC) complex, in part by regulating the cell surface expression of the ENaC complex. May regulate bicarbonate secretion and salvage in epithelial cells by regulating the transporter SLC4A7. Can inhibit the chloride channel activity of ANO1. Plays a role in the chloride and bicarbonate homeostasis during sperm epididymal maturation and capacitation. This Mus musculus (Mouse) protein is Cystic fibrosis transmembrane conductance regulator.